A 478-amino-acid polypeptide reads, in one-letter code: Siroheme synthase (478 aa).

A precorrin-2 dehydrogenase /sirohydrochlorin ferrochelatase region spans residues 1-207; that stretch reads MTANVLFPLF…QRHAEAEAVL (207 aa). Residues 25-26 and 46-47 each bind NAD(+); these read KV and PS. Position 132 is a phosphoserine (S132). A uroporphyrinogen-III C-methyltransferase region spans residues 220–478; the sequence is GSVTLVGAGA…PCPPRTHPIS (259 aa). D252 acts as the Proton acceptor in catalysis. Catalysis depends on K274, which acts as the Proton donor. Residues 305–307, V310, 335–336, M387, and G416 each bind S-adenosyl-L-methionine; these read GGD and TA.

It in the N-terminal section; belongs to the precorrin-2 dehydrogenase / sirohydrochlorin ferrochelatase family. This sequence in the C-terminal section; belongs to the precorrin methyltransferase family.

The catalysed reaction is uroporphyrinogen III + 2 S-adenosyl-L-methionine = precorrin-2 + 2 S-adenosyl-L-homocysteine + H(+). It carries out the reaction precorrin-2 + NAD(+) = sirohydrochlorin + NADH + 2 H(+). The enzyme catalyses siroheme + 2 H(+) = sirohydrochlorin + Fe(2+). Its pathway is cofactor biosynthesis; adenosylcobalamin biosynthesis; precorrin-2 from uroporphyrinogen III: step 1/1. It functions in the pathway cofactor biosynthesis; adenosylcobalamin biosynthesis; sirohydrochlorin from precorrin-2: step 1/1. It participates in porphyrin-containing compound metabolism; siroheme biosynthesis; precorrin-2 from uroporphyrinogen III: step 1/1. The protein operates within porphyrin-containing compound metabolism; siroheme biosynthesis; siroheme from sirohydrochlorin: step 1/1. Its pathway is porphyrin-containing compound metabolism; siroheme biosynthesis; sirohydrochlorin from precorrin-2: step 1/1. In terms of biological role, multifunctional enzyme that catalyzes the SAM-dependent methylations of uroporphyrinogen III at position C-2 and C-7 to form precorrin-2 via precorrin-1. Then it catalyzes the NAD-dependent ring dehydrogenation of precorrin-2 to yield sirohydrochlorin. Finally, it catalyzes the ferrochelation of sirohydrochlorin to yield siroheme. The chain is Siroheme synthase from Xylella fastidiosa (strain M23).